Consider the following 280-residue polypeptide: Putative pyruvate, phosphate dikinase regulatory protein (280 aa).

Residue 158–165 coordinates ADP; sequence GVSRTSKT.

Belongs to the pyruvate, phosphate/water dikinase regulatory protein family. PDRP subfamily.

The enzyme catalyses N(tele)-phospho-L-histidyl/L-threonyl-[pyruvate, phosphate dikinase] + ADP = N(tele)-phospho-L-histidyl/O-phospho-L-threonyl-[pyruvate, phosphate dikinase] + AMP + H(+). The catalysed reaction is N(tele)-phospho-L-histidyl/O-phospho-L-threonyl-[pyruvate, phosphate dikinase] + phosphate + H(+) = N(tele)-phospho-L-histidyl/L-threonyl-[pyruvate, phosphate dikinase] + diphosphate. Its function is as follows. Bifunctional serine/threonine kinase and phosphorylase involved in the regulation of the pyruvate, phosphate dikinase (PPDK) by catalyzing its phosphorylation/dephosphorylation. This is Putative pyruvate, phosphate dikinase regulatory protein from Lactobacillus gasseri (strain ATCC 33323 / DSM 20243 / BCRC 14619 / CIP 102991 / JCM 1131 / KCTC 3163 / NCIMB 11718 / NCTC 13722 / AM63).